The sequence spans 254 residues: Triosephosphate isomerase (254 aa).

Position 12–14 (12–14 (NWK)) interacts with substrate. The Electrophile role is filled by His-99. The active-site Proton acceptor is the Glu-169. Substrate is bound by residues Gly-175, Ser-214, and 235–236 (GG).

The protein belongs to the triosephosphate isomerase family. In terms of assembly, homodimer.

The protein resides in the cytoplasm. The catalysed reaction is D-glyceraldehyde 3-phosphate = dihydroxyacetone phosphate. The protein operates within carbohydrate biosynthesis; gluconeogenesis. It functions in the pathway carbohydrate degradation; glycolysis; D-glyceraldehyde 3-phosphate from glycerone phosphate: step 1/1. In terms of biological role, involved in the gluconeogenesis. Catalyzes stereospecifically the conversion of dihydroxyacetone phosphate (DHAP) to D-glyceraldehyde-3-phosphate (G3P). The protein is Triosephosphate isomerase of Bartonella henselae (strain ATCC 49882 / DSM 28221 / CCUG 30454 / Houston 1) (Rochalimaea henselae).